A 1051-amino-acid chain; its full sequence is Eukaryotic translation initiation factor 3 subunit A (1051 aa).

Positions 92-121 (LKKFIELAEKKVTEAQAKADEIQSSLESAA) form a coiled coil. Residues 339 to 523 (MTKAASFVLL…GVLTFDTDIF (185 aa)) form the PCI domain. Positions 608–905 (RVLIEKKKEA…EAEARRAARK (298 aa)) form a coiled coil. Composition is skewed to basic and acidic residues over residues 617–632 (AATDALQRKQREEETR), 642–664 (EAEKQRLLDEQREREKKRLRDEQ), 794–901 (KEVS…EARR), and 916–926 (AELERPVERTA). 2 disordered regions span residues 617 to 664 (AATD…RDEQ) and 794 to 1051 (KEVS…QQQQ). Composition is skewed to low complexity over residues 948–961 (KEAAGAAPAPAAAE) and 1010–1039 (SSSSQPPSRTQTPPAAAPASSDKPEASPAP).

It belongs to the eIF-3 subunit A family. As to quaternary structure, component of the eukaryotic translation initiation factor 3 (eIF-3) complex.

It is found in the cytoplasm. Functionally, RNA-binding component of the eukaryotic translation initiation factor 3 (eIF-3) complex, which is involved in protein synthesis of a specialized repertoire of mRNAs and, together with other initiation factors, stimulates binding of mRNA and methionyl-tRNAi to the 40S ribosome. The eIF-3 complex specifically targets and initiates translation of a subset of mRNAs involved in cell proliferation. The protein is Eukaryotic translation initiation factor 3 subunit A (tif32) of Aspergillus fumigatus (strain CBS 144.89 / FGSC A1163 / CEA10) (Neosartorya fumigata).